The sequence spans 380 residues: Probable protein phosphatase 2C 2 (380 aa).

Residues 69-339 form the PPM-type phosphatase domain; it reads RSGSFADIGP…DNLTVIVICF (271 aa). Positions 113, 114, 287, and 330 each coordinate Mn(2+).

It belongs to the PP2C family. Mg(2+) is required as a cofactor. Requires Mn(2+) as cofactor.

The catalysed reaction is O-phospho-L-seryl-[protein] + H2O = L-seryl-[protein] + phosphate. It carries out the reaction O-phospho-L-threonyl-[protein] + H2O = L-threonyl-[protein] + phosphate. The protein is Probable protein phosphatase 2C 2 of Oryza sativa subsp. japonica (Rice).